A 1685-amino-acid chain; its full sequence is MKLRGVSLAAGLFLLALSLWGQPAEAAACYGCSPGSKCDCSGIKGEKGERGFPGLEGHPGLPGFPGPEGPPGPRGQKGDDGIPGPPGPKGIRGPPGLPGFPGTPGLPGMPGHDGAPGPQGIPGCNGTKGERGFPGSPGFPGLQGPPGPPGIPGMKGEPGSIIMSSLPGPKGNPGYPGPPGIQGLPGPTGIPGPIGPPGPPGLMGPPGPPGLPGPKGNMGLNFQGPKGEKGEQGLQGPPGPPGQISEQKRPIDVEFQKGDQGLPGDRGPPGPPGIRGPPGPPGGEKGEKGEQGEPGKRGKPGKDGENGQPGIPGLPGDPGYPGEPGRDGEKGQKGDTGPPGPPGLVIPRPGTGITIGEKGNIGLPGLPGEKGERGFPGIQGPPGLPGPPGAAVMGPPGPPGFPGERGQKGDEGPPGISIPGPPGLDGQPGAPGLPGPPGPAGPHIPPSDEICEPGPPGPPGSPGDKGLQGEQGVKGDKGDTCFNCIGTGISGPPGQPGLPGLPGPPGSLGFPGQKGEKGQAGATGPKGLPGIPGAPGAPGFPGSKGEPGDILTFPGMKGDKGELGSPGAPGLPGLPGTPGQDGLPGLPGPKGEPGGITFKGERGPPGNPGLPGLPGNIGPMGPPGFGPPGPVGEKGIQGVAGNPGQPGIPGPKGDPGQTITQPGKPGLPGNPGRDGDVGLPGDPGLPGQPGLPGIPGSKGEPGIPGIGLPGPPGPKGFPGIPGPPGAPGTPGRIGLEGPPGPPGFPGPKGEPGFALPGPPGPPGLPGFKGALGPKGDRGFPGPPGPPGRTGLDGLPGPKGDVGPNGQPGPMGPPGLPGIGVQGPPGPPGIPGPIGQPGLHGIPGEKGDPGPPGLDVPGPPGERGSPGIPGAPGPIGPPGSPGLPGKAGASGFPGTKGEMGMMGPPGPPGPLGIPGRSGVPGLKGDDGLQGQPGLPGPTGEKGSKGEPGLPGPPGPMDPNLLGSKGEKGEPGLPGIPGVSGPKGYQGLPGDPGQPGLSGQPGLPGPPGPKGNPGLPGQPGLIGPPGLKGTIGDMGFPGPQGVEGPPGPSGVPGQPGSPGLPGQKGDKGDPGISSIGLPGLPGPKGEPGLPGYPGNPGIKGSVGDPGLPGLPGTPGAKGQPGLPGFPGTPGPPGPKGISGPPGNPGLPGEPGPVGGGGHPGQPGPPGEKGKPGQDGIPGPAGQKGEPGQPGFGNPGPPGLPGLSGQKGDGGLPGIPGNPGLPGPKGEPGFHGFPGVQGPPGPPGSPGPALEGPKGNPGPQGPPGRPGLPGPEGPPGLPGNGGIKGEKGNPGQPGLPGLPGLKGDQGPPGLQGNPGRPGLNGMKGDPGLPGVPGFPGMKGPSGVPGSAGPEGEPGLIGPPGPPGLPGPSGQSIIIKGDAGPPGIPGQPGLKGLPGPQGPQGLPGPTGPPGDPGRNGLPGFDGAGGRKGDPGLPGQPGTRGLDGPPGPDGLQGPPGPPGTSSVAHGFLITRHSQTTDAPQCPQGTLQVYEGFSLLYVQGNKRAHGQDLGTAGSCLRRFSTMPFMFCNINNVCNFASRNDYSYWLSTPEPMPMSMQPLKGQSIQPFISRCAVCEAPAVVIAVHSQTIQIPHCPQGWDSLWIGYSFMMHTSAGAEGSGQALASPGSCLEEFRSAPFIECHGRGTCNYYANSYSFWLATVDVSDMFSKPQSETLKAGDLRTRISRCQVCMKRT.

The first 26 residues, 1–26 (MKLRGVSLAAGLFLLALSLWGQPAEA), serve as a signal peptide directing secretion. The interval 27-41 (AACYGCSPGSKCDCS) is nonhelical region (NC2). The tract at residues 42–1456 (GIKGEKGERG…QGPPGPPGTS (1415 aa)) is triple-helical region. The segment at 49–1459 (ERGFPGLEGH…PGPPGTSSVA (1411 aa)) is disordered. The segment covering 52–61 (FPGLEGHPGL) has biased composition (low complexity). A compositionally biased stretch (pro residues) spans 62–73 (PGFPGPEGPPGP). The N-linked (GlcNAc...) asparagine glycan is linked to N125. Positions 188–212 (TGIPGPIGPPGPPGLMGPPGPPGLP) are enriched in pro residues. A compositionally biased stretch (low complexity) spans 214–225 (PKGNMGLNFQGP). Residues 246-257 (EQKRPIDVEFQK) show a composition bias toward basic and acidic residues. The segment covering 266-281 (RGPPGPPGIRGPPGPP) has biased composition (pro residues). Composition is skewed to basic and acidic residues over residues 284–305 (EKGE…KDGE) and 324–333 (PGRDGEKGQK). Residues 413–430 (PPGISIPGPPGLDGQPGA) show a composition bias toward low complexity. Composition is skewed to pro residues over residues 431-445 (PGLP…PHIP), 493-505 (PGQP…PGPP), 620-630 (MGPPGFGPPGP), and 709-727 (PGPP…PGAP). The span at 788-797 (RTGLDGLPGP) shows a compositional bias: low complexity. Pro residues-rich tracts occupy residues 848-859 (PGPPGLDVPGPP) and 868-880 (PGAP…PGSP). Composition is skewed to low complexity over residues 882-901 (LPGK…MGMM), 912-931 (IPGR…QGQP), 983-999 (YQGL…SGQP), 1010-1026 (NPGL…PGLK), and 1111-1120 (TPGAKGQPGL). A compositionally biased stretch (pro residues) spans 1139–1148 (PGNPGLPGEP). Composition is skewed to gly residues over residues 1149–1158 (GPVGGGGHPG) and 1202–1211 (GQKGDGGLPG). Composition is skewed to pro residues over residues 1234-1243 (QGPPGPPGSP) and 1256-1274 (PQGP…PPGL). Positions 1295-1308 (LPGLKGDQGPPGLQ) are enriched in low complexity. Residues 1353 to 1362 (IGPPGPPGLP) are compositionally biased toward pro residues. In terms of domain architecture, Collagen IV NC1 spans 1461–1685 (GFLITRHSQT…SRCQVCMKRT (225 aa)). Disulfide bonds link C1476-C1567, C1509-C1564, C1521-C1527, C1586-C1681, C1620-C1678, and C1632-C1638. M1549 is covalently cross-linked (S-Lysyl-methionine sulfilimine (Met-Lys) (interchain with K-1667)). An S-Lysyl-methionine sulfilimine (Lys-Met) (interchain with M-1549) cross-link involves residue K1667.

This sequence belongs to the type IV collagen family. There are six type IV collagen isoforms, alpha 1(IV)-alpha 6(IV), each of which can form a triple helix structure with 2 other chains to generate type IV collagen network. Prolines at the third position of the tripeptide repeating unit (G-X-Y) are hydroxylated in some or all of the chains. Post-translationally, type IV collagens contain numerous cysteine residues which are involved in inter- and intramolecular disulfide bonding. 12 of these, located in the NC1 domain, are conserved in all known type IV collagens. In terms of processing, the trimeric structure of the NC1 domains is stabilized by covalent bonds between Lys and Met residues. In terms of tissue distribution, isoform 2 is found in kidney.

It localises to the secreted. Its subcellular location is the extracellular space. It is found in the extracellular matrix. The protein localises to the basement membrane. Type IV collagen is the major structural component of glomerular basement membranes (GBM), forming a 'chicken-wire' meshwork together with laminins, proteoglycans and entactin/nidogen. This chain is Collagen alpha-5(IV) chain (COL4A5), found in Homo sapiens (Human).